Here is a 289-residue protein sequence, read N- to C-terminus: Light-independent protochlorophyllide reductase iron-sulfur ATP-binding protein (289 aa).

ATP-binding positions include 10–15 (GIGKST) and Lys39. Residue Ser14 coordinates Mg(2+). [4Fe-4S] cluster-binding residues include Cys95 and Cys129. Position 180 to 181 (180 to 181 (NR)) interacts with ATP.

Belongs to the NifH/BchL/ChlL family. Homodimer. Protochlorophyllide reductase is composed of three subunits; ChlL, ChlN and ChlB. Requires [4Fe-4S] cluster as cofactor.

Its subcellular location is the plastid. The protein localises to the chloroplast. It carries out the reaction chlorophyllide a + oxidized 2[4Fe-4S]-[ferredoxin] + 2 ADP + 2 phosphate = protochlorophyllide a + reduced 2[4Fe-4S]-[ferredoxin] + 2 ATP + 2 H2O. It participates in porphyrin-containing compound metabolism; chlorophyll biosynthesis (light-independent). Component of the dark-operative protochlorophyllide reductase (DPOR) that uses Mg-ATP and reduced ferredoxin to reduce ring D of protochlorophyllide (Pchlide) to form chlorophyllide a (Chlide). This reaction is light-independent. The L component serves as a unique electron donor to the NB-component of the complex, and binds Mg-ATP. The polypeptide is Light-independent protochlorophyllide reductase iron-sulfur ATP-binding protein (Tetradesmus obliquus (Green alga)).